A 94-amino-acid chain; its full sequence is Integration host factor subunit beta (94 aa).

It belongs to the bacterial histone-like protein family. As to quaternary structure, heterodimer of an alpha and a beta chain.

Functionally, this protein is one of the two subunits of integration host factor, a specific DNA-binding protein that functions in genetic recombination as well as in transcriptional and translational control. This Citrobacter koseri (strain ATCC BAA-895 / CDC 4225-83 / SGSC4696) protein is Integration host factor subunit beta.